A 232-amino-acid chain; its full sequence is Probable transcriptional regulatory protein Bd1964 (232 aa).

This sequence belongs to the TACO1 family.

Its subcellular location is the cytoplasm. In Bdellovibrio bacteriovorus (strain ATCC 15356 / DSM 50701 / NCIMB 9529 / HD100), this protein is Probable transcriptional regulatory protein Bd1964.